A 117-amino-acid polypeptide reads, in one-letter code: Large ribosomal subunit protein bL20 (117 aa).

It belongs to the bacterial ribosomal protein bL20 family.

Its function is as follows. Binds directly to 23S ribosomal RNA and is necessary for the in vitro assembly process of the 50S ribosomal subunit. It is not involved in the protein synthesizing functions of that subunit. The chain is Large ribosomal subunit protein bL20 from Photobacterium profundum (strain SS9).